Consider the following 1877-residue polypeptide: Neuron navigator 1 (1877 aa).

Met1 is modified (N-acetylmethionine). The disordered stretch occupies residues 1-59 (MLGSSVKSVQPEVELSSGGGDEGADEPRGAGRKAAAADGRGMLPKRAKAPGGGGGMAKA). Low complexity predominate over residues 32–41 (RKAAAADGRG). Phosphoserine occurs at positions 90, 142, and 152. The interval 114–225 (DMAKAPKGLG…PVPSAKGQEE (112 aa)) is disordered. Thr159 carries the post-translational modification Phosphothreonine. Residues Ser194 and Ser199 each carry the phosphoserine modification. The span at 205–214 (SSKAKAQKSS) shows a compositional bias: low complexity. Positions 255–280 (ESQRKRTVQNVLDLRQNLEETMSSLR) form a coiled coil. A disordered region spans residues 294–336 (YDSDDANPRSVSSLSNRSSPLSWRYGQSSPRLQAGDAPSVGGS). Phosphoserine occurs at positions 296, 308, 312, 362, and 391. The span at 301 to 315 (PRSVSSLSNRSSPLS) shows a compositional bias: low complexity. Disordered regions lie at residues 386-839 (KSGY…PLPS) and 892-989 (MSLP…PMSL). Low complexity-rich tracts occupy residues 411-425 (DESS…DASD) and 433-448 (NASS…PTAS). Ser452, Ser474, Ser476, and Ser490 each carry phosphoserine. The segment covering 476-486 (SEEKAPKKLEY) has biased composition (basic and acidic residues). Residues 503-519 (ERPESCDDSSKGGELKK) are compositionally biased toward basic and acidic residues. Phosphoserine is present on Ser528. Thr534 is subject to Phosphothreonine. Ser541 carries the post-translational modification Phosphoserine. A Phosphothreonine modification is found at Thr544. The segment covering 555–566 (GKPEGKATDKGK) has biased composition (basic and acidic residues). Phosphothreonine is present on Thr572. Over residues 581–591 (AGRDRLSDAKK) the composition is skewed to basic and acidic residues. Polar residues-rich tracts occupy residues 615 to 635 (GTAT…QKSS) and 645 to 655 (RKTSLDVSNSA). Ser648 is subject to Phosphoserine. Position 688 is an omega-N-methylarginine (Arg688). Composition is skewed to polar residues over residues 698–710 (IDPS…QGGL) and 724–733 (GRTTPAPVNQ). Residues 731 to 756 (VNQTDREKEKAKAKAVALDSDNISLK) are a coiled coil. Ser750, Ser754, Ser760, Ser797, and Ser808 each carry phosphoserine. Polar residues predominate over residues 751–773 (DNISLKSIGSPESTPKNQASHPT). The segment covering 805-818 (NSNSLDLPSSSDTT) has biased composition (low complexity). Residues 902-913 (TPVPTPPAPPAA) show a composition bias toward pro residues. At Ser1000 the chain carries Phosphoserine. Thr1006 is modified (phosphothreonine). Residues 1072–1163 (SSAEERMQSE…SEAQAVIQGA (92 aa)) are a coiled coil. Thr1170 is subject to Phosphothreonine. Disordered stretches follow at residues 1172–1204 (KELR…KDAD), 1244–1306 (ATPD…EKKE), 1359–1383 (LKVA…LSSP), and 1810–1843 (KLYH…SLDS). Ser1181 carries the post-translational modification Phosphoserine. Residues 1181 to 1200 (SSDSISSLNSITSHSSIGSS) show a composition bias toward low complexity. Residues 1246-1264 (PDSSAPSSPKLQHGSTETA) are compositionally biased toward polar residues. Phosphoserine is present on Ser1265. Residues 1265–1275 (SPSIKSSTSSS) are compositionally biased toward low complexity. Positions 1303 to 1362 (EKKEVSELRSELWEKEMKLTDIRLEALNSAHQLDQLRETMHNMQLEVDLLKAENDRLKVA) form a coiled coil. Positions 1366–1383 (SSGSTPGQVPGSSALSSP) are enriched in polar residues. Position 1382 is a phosphoserine (Ser1382).

It belongs to the Nav/unc-53 family. In terms of assembly, interacts with tubulin. As to expression, broadly expressed at low levels. Expressed at high levels in heart, skeletal muscle and placenta.

The protein localises to the cytoplasm. It is found in the cytoskeleton. Its function is as follows. May be involved in neuronal migration. The protein is Neuron navigator 1 (NAV1) of Homo sapiens (Human).